An 808-amino-acid chain; its full sequence is Envelope glycoprotein B (808 aa).

Positions 1 to 19 (MVPNKHLLLIILSFSTACG) are cleaved as a signal peptide. Residues 20-701 (QTTPTTAVEK…TGILNFIKNP (682 aa)) lie on the Virion surface side of the membrane. N-linked (GlcNAc...) asparagine; by host glycosylation is present at asparagine 30. 5 cysteine pairs are disulfide-bonded: cysteine 45/cysteine 498, cysteine 62/cysteine 454, cysteine 136/cysteine 201, cysteine 291/cysteine 338, and cysteine 520/cysteine 557. The involved in fusion and/or binding to host membrane stretch occupies residues 101–107 (IFNGWTR). Asparagine 158 carries an N-linked (GlcNAc...) asparagine; by host glycan. The involved in fusion and/or binding to host membrane stretch occupies residues 187-195 (GWLWGTYRT). Asparagine 239, asparagine 251, asparagine 285, asparagine 331, asparagine 344, asparagine 355, asparagine 361, asparagine 532, asparagine 569, asparagine 587, and asparagine 598 each carry an N-linked (GlcNAc...) asparagine; by host glycan. Hydrophobic membrane proximal region stretches follow at residues 647–699 (FDNS…NFIK) and 658–698 (IIQD…LNFI). A helical membrane pass occupies residues 702 to 722 (LGGMFTFLLIGAVIILVILLV). The Intravirion segment spans residues 723-808 (RRTNNMSQAP…KQISTEDKIV (86 aa)).

It belongs to the herpesviridae glycoprotein B family. In terms of assembly, homotrimer; disulfide-linked. Binds to heparan sulfate proteoglycans. Interacts with gH/gL heterodimer. In terms of processing, a proteolytic cleavage by host furin generates two subunits that remain linked by disulfide bonds.

It is found in the virion membrane. Its subcellular location is the host cell membrane. The protein resides in the host endosome membrane. It localises to the host Golgi apparatus membrane. In terms of biological role, envelope glycoprotein that forms spikes at the surface of virion envelope. Essential for the initial attachment to heparan sulfate moieties of the host cell surface proteoglycans. Involved in fusion of viral and cellular membranes leading to virus entry into the host cell. Following initial binding to its host receptors, membrane fusion is mediated by the fusion machinery composed at least of gB and the heterodimer gH/gL. May be involved in the fusion between the virion envelope and the outer nuclear membrane during virion egress. The protein is Envelope glycoprotein B of Saimiriine herpesvirus 2 (strain 11) (SaHV-2).